A 121-amino-acid chain; its full sequence is MIQPQTHLNVADNSGARELMCIRIIGASNRRYARIGDVIVAVIKEAIPNTPLERSEVIRAVVVRTCKELKRDNGMIIRYDDNAAVIIDQEGNPKGTRIFGAIARELRQKFAKIVSLAPEVL.

As to quaternary structure, component of the chloroplast large ribosomal subunit (LSU). Mature 70S chloroplast ribosomes of higher plants consist of a small (30S) and a large (50S) subunit. The 30S small subunit contains 1 molecule of ribosomal RNA (16S rRNA) and 24 different proteins. The 50S large subunit contains 3 rRNA molecules (23S, 5S and 4.5S rRNA) and 33 different proteins.

The protein localises to the plastid. Its subcellular location is the chloroplast. Functionally, component of the chloroplast ribosome (chloro-ribosome), a dedicated translation machinery responsible for the synthesis of chloroplast genome-encoded proteins, including proteins of the transcription and translation machinery and components of the photosynthetic apparatus. This Spinacia oleracea (Spinach) protein is Large ribosomal subunit protein uL14c.